The following is a 629-amino-acid chain: Coiled-coil domain-containing protein 120 (629 aa).

Residues 31-70 (RLRGLLDRQRALQEALSVKLQELRKVCLQEAELTGQLPPE) are involved in CYTH2-binding. The stretch at 109–173 (ELALEALERE…LRDFRARLGL (65 aa)) forms a coiled coil. Composition is skewed to low complexity over residues 209-219 (HSESSSLSESG) and 279-294 (ASPT…SASS). Residues 209–356 (HSESSSLSES…LFAARTRRSN (148 aa)) form a disordered region. A compositionally biased stretch (polar residues) spans 323–332 (RQWSGSQDSQ). Residues S355 and S357 each carry the phosphoserine modification. Disordered stretches follow at residues 399–432 (QPVP…GAPR) and 602–629 (PSQA…FTDG). The segment covering 418–432 (ARPSSAAPASRGAPR) has biased composition (low complexity). R432 is modified (omega-N-methylarginine).

As to quaternary structure, interacts with NIN and CEP170; leading to recruit them to centrosomes. Interacts with CYTH2; this interaction is direct and stabilizes CCDC120, possibly by preventing ubiquitination. Post-translationally, ubiquitinated; interaction with CYTH2 may prevent ubiquitination.

The protein resides in the cytoplasm. It localises to the cytoskeleton. It is found in the microtubule organizing center. Its subcellular location is the centrosome. The protein localises to the centriole. The protein resides in the cell projection. It localises to the neuron projection. It is found in the growth cone. Its subcellular location is the endosome. In terms of biological role, centriolar protein required for centriole subdistal appendage assembly and microtubule anchoring in interphase cells. Together with CCDC68, cooperate with subdistal appendage components ODF2, NIN and CEP170 for hierarchical subdistal appendage assembly. Recruits NIN and CEP170 to centrosomes. Also required for neurite growth. Localizes CYTH2 to vesicles to allow its transport along neurites, and subsequent ARF6 activation and neurite growth. The polypeptide is Coiled-coil domain-containing protein 120 (Mus musculus (Mouse)).